A 262-amino-acid chain; its full sequence is MSTGVRPGRRFTVGRSEDATHPDTIRAAISEFIATAIFVFAAEGSVLSLGKMYHDMSTAGGLVAVALAHALALAVAVAVAVNISGGHVNPAVTFGALVGGRVSLVRAVLYWVAQLLGAVAATLLLRLATGGMRPPGFALASGVGDWHAVLLEAVMTFGLMYAYYATVIDPKRGHVGTIAPLAVGFLLGANVLAGGPFDGAGMNPARVFGPALVGWRWRHHWVYWLGPFLGAGLAGLVYEYLVIPSADAAVPHAHQPLAPEDY.

The next 2 membrane-spanning stretches (helical) occupy residues 27–47 (AAISEFIATAIFVFAAEGSVL) and 61–81 (GLVAVALAHALALAVAVAVAV). The NPA 1 motif lies at 89 to 91 (NPA). The next 3 membrane-spanning stretches (helical) occupy residues 104-124 (LVRAVLYWVAQLLGAVAATLL), 148-168 (AVLLEAVMTFGLMYAYYATVI), and 175-195 (VGTIAPLAVGFLLGANVLAGG). An NPA 2 motif is present at residues 203–205 (NPA). The chain crosses the membrane as a helical span at residues 223 to 243 (YWLGPFLGAGLAGLVYEYLVI).

It belongs to the MIP/aquaporin (TC 1.A.8) family. TIP (TC 1.A.8.10) subfamily.

Its subcellular location is the vacuole membrane. Aquaporins facilitate the transport of water and small neutral solutes across cell membranes. The sequence is that of Aquaporin TIP3-1 (TIP3-1) from Zea mays (Maize).